We begin with the raw amino-acid sequence, 973 residues long: Vacuolar membrane protease (973 aa).

The Cytoplasmic segment spans residues 1 to 15 (MARQYSRTNPLGFTP). Residues 16–36 (WPVTIITALVYLALVIPLLVV) form a helical membrane-spanning segment. At 37–383 (QHVVPSAPGS…STLAVFELHT (347 aa)) the chain is on the vacuolar side. 2 N-linked (GlcNAc...) asparagine glycosylation sites follow: Asn-52 and Asn-115. Residues His-167 and Asp-179 each coordinate Zn(2+). Glu-213 acts as the Proton acceptor in catalysis. Zn(2+)-binding residues include Glu-214, Glu-239, and His-312. A helical transmembrane segment spans residues 384–404 (LFALSVTLLIVAPLVLLATSI). Residues 405–438 (ALVRADRMYLFRSTARVPGSDDFDEGVSLQGVRG) are Cytoplasmic-facing. A helical membrane pass occupies residues 439-459 (FFRFPFLLVIPTGVAVGLAYL). The Vacuolar portion of the chain corresponds to 460 to 469 (VTKINPYIIH). The chain crosses the membrane as a helical span at residues 470-490 (SSEYAVWSMMISAWVFLAWFV). At 491-504 (SRVADFARPSAFHR) the chain is on the cytoplasmic side. A helical transmembrane segment spans residues 505–525 (VYVLTWMFVAEWVLLVIATVY). Residues 526 to 529 (ENRY) lie on the Vacuolar side of the membrane. Residues 530 to 550 (GLAGGYFVFFALSGTFLATWI) traverse the membrane as a helical segment. At 551 to 674 (SYLELFALPR…GLPKWTWVLQ (124 aa)) the chain is on the cytoplasmic side. The tract at residues 572-623 (SRYASNHGSRLGTSSGEHGMDDAEDEEDDDGDDEDEARNVEEEPTESTSLLR) is disordered. The span at 574–587 (YASNHGSRLGTSSG) shows a compositional bias: polar residues. Positions 593-607 (DAEDEEDDDGDDEDE) are enriched in acidic residues. Residues 675–695 (FLLSAPIVLILVGPLALLLTA) traverse the membrane as a helical segment. The Vacuolar segment spans residues 696–708 (ALRQTAQDGSSPL). A helical transmembrane segment spans residues 709–729 (FVYIAIAVLTTLLVTPLLPFI). Topologically, residues 730 to 735 (HRYTHH) are cytoplasmic. A helical transmembrane segment spans residues 736–756 (IPLFLLLVFTGTLIYNLVAFP). At 757–973 (FSPSNRLKLF…LVEGSRRFEV (217 aa)) the chain is on the vacuolar side. Asn-803 and Asn-839 each carry an N-linked (GlcNAc...) asparagine glycan.

The protein belongs to the peptidase M28 family. Requires Zn(2+) as cofactor.

The protein localises to the vacuole membrane. Its function is as follows. May be involved in vacuolar sorting and osmoregulation. The polypeptide is Vacuolar membrane protease (Aspergillus clavatus (strain ATCC 1007 / CBS 513.65 / DSM 816 / NCTC 3887 / NRRL 1 / QM 1276 / 107)).